The chain runs to 187 residues: MRLVLLGPPGSGKGTQAARLKDTFQIPHISTGDLLRAEVAAGSPLGVKAKEVMARGDLVSDEILLGMLEARLGQADVANGFILDGYPRNVAQANALDSLLSKIGQPLDAVVQLDVASELLVERIAGRAKAEGREDDNPESVRKRLQVYTDSTAPVIGFYEQRGKLARVDGVGSLDEVLKRIGQALGR.

10–15 (GSGKGT) serves as a coordination point for ATP. The interval 30 to 59 (STGDLLRAEVAAGSPLGVKAKEVMARGDLV) is NMP. AMP contacts are provided by residues Thr-31, Arg-36, 57–59 (DLV), 85–88 (GYPR), and Gln-92. Residues 126–136 (GRAKAEGREDD) form an LID region. Arg-127 lines the ATP pocket. 2 residues coordinate AMP: Arg-133 and Arg-144. Gly-172 contacts ATP.

It belongs to the adenylate kinase family. Monomer.

The protein resides in the cytoplasm. The enzyme catalyses AMP + ATP = 2 ADP. It functions in the pathway purine metabolism; AMP biosynthesis via salvage pathway; AMP from ADP: step 1/1. Its function is as follows. Catalyzes the reversible transfer of the terminal phosphate group between ATP and AMP. Plays an important role in cellular energy homeostasis and in adenine nucleotide metabolism. This is Adenylate kinase from Xanthomonas campestris pv. campestris (strain B100).